The chain runs to 215 residues: MTDSSPQSNPNAVPGAADVPAAAQGQQQEQRRGGGGGGRGDRRGDRRGGRRGQDRDSEWQERVVQIRRVSKTVKGGKKMSFRAIVVVGNEKGQVGVGVGKAGDVIGAVRKGVADGKKHLVKVPLTRHSSIPTLSNGRDGAASVLIRPAAPGTGVIAGGSIRTVLELAGIKNVLAKRLGSKTPLNNARAAMVALSSLRTHKETAKERGISLEQIYS.

Positions 1–11 (MTDSSPQSNPN) are enriched in polar residues. The tract at residues 1-61 (MTDSSPQSNP…GQDRDSEWQE (61 aa)) is disordered. Low complexity predominate over residues 12–28 (AVPGAADVPAAAQGQQQ). The span at 39–61 (RGDRRGDRRGGRRGQDRDSEWQE) shows a compositional bias: basic and acidic residues. Residues 59–122 (WQERVVQIRR…ADGKKHLVKV (64 aa)) form the S5 DRBM domain.

Belongs to the universal ribosomal protein uS5 family. In terms of assembly, part of the 30S ribosomal subunit. Contacts proteins S4 and S8.

Functionally, with S4 and S12 plays an important role in translational accuracy. Its function is as follows. Located at the back of the 30S subunit body where it stabilizes the conformation of the head with respect to the body. This is Small ribosomal subunit protein uS5 from Synechococcus sp. (strain CC9902).